We begin with the raw amino-acid sequence, 204 residues long: TPR repeat-containing protein RHE_CH03534.1 (204 aa).

A signal peptide spans methionine 1–alanine 29. TPR repeat units follow at residues isoleucine 84 to tyrosine 117, alanine 118 to histidine 151, and glycine 153 to aspartate 185.

The protein is TPR repeat-containing protein RHE_CH03534.1 of Rhizobium etli (strain ATCC 51251 / DSM 11541 / JCM 21823 / NBRC 15573 / CFN 42).